A 117-amino-acid polypeptide reads, in one-letter code: Large ribosomal subunit protein bL20c (117 aa).

This sequence belongs to the bacterial ribosomal protein bL20 family.

Its subcellular location is the plastid. It is found in the chloroplast. Binds directly to 23S ribosomal RNA and is necessary for the in vitro assembly process of the 50S ribosomal subunit. It is not involved in the protein synthesizing functions of that subunit. In Drimys granadensis, this protein is Large ribosomal subunit protein bL20c.